A 290-amino-acid polypeptide reads, in one-letter code: Enoyl-CoA hydratase, mitochondrial (290 aa).

A mitochondrion-targeting transit peptide spans Met-1–Phe-27. Residues Ala-98 to Lys-101 and Gly-141 each bind substrate. Lys-101 carries the N6-acetyllysine; alternate modification. Position 101 is an N6-succinyllysine; alternate (Lys-101). Lys-204 carries the post-translational modification N6-succinyllysine. Lys-211 carries the N6-acetyllysine modification.

Belongs to the enoyl-CoA hydratase/isomerase family. Homohexamer; dimer of trimers.

It localises to the mitochondrion matrix. It carries out the reaction a (3S)-3-hydroxyacyl-CoA = a (2E)-enoyl-CoA + H2O. It catalyses the reaction a (3E)-enoyl-CoA = a 4-saturated (2E)-enoyl-CoA. The catalysed reaction is (3E)-hexenoyl-CoA = (2E)-hexenoyl-CoA. The enzyme catalyses (3S)-3-hydroxybutanoyl-CoA = (2E)-butenoyl-CoA + H2O. It carries out the reaction 3-hydroxyisovaleryl-CoA = 3-methylbut-2-enoyl-CoA + H2O. It catalyses the reaction 3-hydroxypropanoyl-CoA = acryloyl-CoA + H2O. The catalysed reaction is 3-hydroxybutanoyl-CoA = (2E)-butenoyl-CoA + H2O. The enzyme catalyses 2-methylpropenoyl-CoA + H2O = (S)-3-hydroxyisobutanoyl-CoA. It carries out the reaction (3S)-hydroxyhexanoyl-CoA = (2E)-hexenoyl-CoA + H2O. It catalyses the reaction (3S)-hydroxydecanoyl-CoA = (2E)-decenoyl-CoA + H2O. It functions in the pathway lipid metabolism; fatty acid beta-oxidation. Its function is as follows. Converts unsaturated trans-2-enoyl-CoA species ((2E)-enoyl-CoA) to the corresponding 3(S)-3-hydroxyacyl-CoA species through addition of a water molecule to the double bond. Catalyzes the hydration of medium- and short-chained fatty enoyl-CoA thioesters from 4 carbons long (C4) up to C16. Has high substrate specificity for crotonyl-CoA ((2E)-butenoyl-CoA) and moderate specificity for acryloyl-CoA, 3-methylcrotonyl-CoA (3-methyl-(2E)-butenoyl-CoA) and methacrylyl-CoA ((2E)-2-methylpropenoyl-CoA). Can bind tiglyl-CoA (2-methylcrotonoyl-CoA), but hydrates only a small amount of this substrate. Plays a key role in the beta-oxidation spiral of short- and medium-chain fatty acid oxidation. At a lower rate than the hydratase reaction, catalyzes the isomerase reaction of trans-3-enoyl-CoA species (such as (3E)-hexenoyl-CoA) to trans-2-enoyl-CoA species (such as (2E)-hexenoyl-CoA), which are subsequently hydrated to 3(S)-3-hydroxyacyl-CoA species (such as (3S)-hydroxyhexanoyl-CoA). The chain is Enoyl-CoA hydratase, mitochondrial (ECHS1) from Bos taurus (Bovine).